The sequence spans 91 residues: Acyl carrier protein (91 aa).

The Carrier domain maps to 4 to 79 (QQILDKVQSI…QAVDYILQHK (76 aa)). S39 carries the post-translational modification O-(pantetheine 4'-phosphoryl)serine.

Belongs to the acyl carrier protein (ACP) family. 4'-phosphopantetheine is transferred from CoA to a specific serine of apo-ACP by AcpS. This modification is essential for activity because fatty acids are bound in thioester linkage to the sulfhydryl of the prosthetic group.

The protein localises to the plastid. Its subcellular location is the chloroplast. It functions in the pathway lipid metabolism; fatty acid biosynthesis. Its function is as follows. Carrier of the growing fatty acid chain in fatty acid biosynthesis. The protein is Acyl carrier protein of Cyanidioschyzon merolae (strain NIES-3377 / 10D) (Unicellular red alga).